We begin with the raw amino-acid sequence, 283 residues long: Probable endonuclease 4 (283 aa).

Zn(2+) is bound by residues H66, H106, E141, D174, H177, H211, D224, H226, and E256.

Belongs to the AP endonuclease 2 family. Zn(2+) is required as a cofactor.

It catalyses the reaction Endonucleolytic cleavage to 5'-phosphooligonucleotide end-products.. Its function is as follows. Endonuclease IV plays a role in DNA repair. It cleaves phosphodiester bonds at apurinic or apyrimidinic (AP) sites, generating a 3'-hydroxyl group and a 5'-terminal sugar phosphate. In Carboxydothermus hydrogenoformans (strain ATCC BAA-161 / DSM 6008 / Z-2901), this protein is Probable endonuclease 4.